The following is a 367-amino-acid chain: MVMEVGILDAGGLRALLREGAAQCLLLDCRSFFAFNAGHIAGSVNVRFSTIVRRRAKGAMGLEHIVPNAELRGRLLAGAYHAVVLLDERSASLDGAKRDGTLALAAGALCREARSTQVFFLQGGYEAFSASCPELCSKQSTPTGLSLPLSTSVPDSAESGCSSCSTPLYDQGGPVEILSFLYLGSAYHASRKDMLDALGITALINVSANCPNHFEGHYQYKSIPVEDNHKADISSWFNEAIDFIDSIKDAGGRVFVHCQAGISRSATICLAYLMRTNRVKLDEAFEFVKQRRSIISPNFSFMGQLLQFESQVLAPHCSAEAGSPAMAVLDRGTSTTTVFNFPVSIPVHPTNSALNYLKSPITTSPSC.

The Rhodanese domain occupies 20–137 (GAAQCLLLDC…FSASCPELCS (118 aa)). A Tyrosine-protein phosphatase domain is found at 173 to 314 (GPVEILSFLY…LLQFESQVLA (142 aa)). Cysteine 258 serves as the catalytic Phosphocysteine intermediate. A phosphoserine; by MAPK1 and MAPK3 mark is found at serine 359 and serine 364.

The protein belongs to the protein-tyrosine phosphatase family. Non-receptor class dual specificity subfamily. Post-translationally, phosphorylation at Ser-359 and Ser-364 by MAPK1/ERK2 and MAPK3/ERK1 reduces its rate of degradation. In terms of processing, 'Lys-48'-linked polyubiquitinated by NEURL3, leading to proteasomal degradation.

It localises to the nucleus. It carries out the reaction O-phospho-L-tyrosyl-[protein] + H2O = L-tyrosyl-[protein] + phosphate. The enzyme catalyses O-phospho-L-seryl-[protein] + H2O = L-seryl-[protein] + phosphate. The catalysed reaction is O-phospho-L-threonyl-[protein] + H2O = L-threonyl-[protein] + phosphate. In terms of biological role, dual specificity phosphatase that dephosphorylates MAP kinase MAPK1/ERK2 on both 'Thr-183' and 'Tyr-185', regulating its activity during the meiotic cell cycle. In Mus musculus (Mouse), this protein is Dual specificity protein phosphatase 1.